We begin with the raw amino-acid sequence, 345 residues long: tRNA-specific 2-thiouridylase MnmA 1 (345 aa).

ATP-binding positions include 9 to 16 (GMSGGIDS) and Leu-35. Catalysis depends on Cys-96, which acts as the Nucleophile. A disulfide bridge links Cys-96 with Cys-191. Gly-120 contacts ATP. The interaction with tRNA stretch occupies residues 138 to 140 (KDQ). The Cysteine persulfide intermediate role is filled by Cys-191. An interaction with tRNA region spans residues 293 to 294 (RY).

It belongs to the MnmA/TRMU family.

The protein resides in the cytoplasm. It carries out the reaction S-sulfanyl-L-cysteinyl-[protein] + uridine(34) in tRNA + AH2 + ATP = 2-thiouridine(34) in tRNA + L-cysteinyl-[protein] + A + AMP + diphosphate + H(+). Catalyzes the 2-thiolation of uridine at the wobble position (U34) of tRNA, leading to the formation of s(2)U34. This is tRNA-specific 2-thiouridylase MnmA 1 from Aliarcobacter butzleri (strain RM4018) (Arcobacter butzleri).